Here is a 635-residue protein sequence, read N- to C-terminus: Probable retaining alpha-galactosidase (635 aa).

A signal peptide spans M1 to A30. Residue D179 participates in Ca(2+) binding. The active-site Nucleophile is D397. Positions 446 and 452 each coordinate Ca(2+). Catalysis depends on E452, which acts as the Proton donor/acceptor.

The protein belongs to the glycosyl hydrolase 97 family. Ca(2+) serves as cofactor.

The enzyme catalyses Hydrolysis of terminal, non-reducing alpha-D-galactose residues in alpha-D-galactosides, including galactose oligosaccharides, galactomannans and galactolipids.. The chain is Probable retaining alpha-galactosidase from Streptomyces bingchenggensis (strain BCW-1).